A 123-amino-acid polypeptide reads, in one-letter code: Putative iron-sulfur cluster insertion protein ErpA (123 aa).

Positions 51, 115, and 117 each coordinate iron-sulfur cluster.

This sequence belongs to the HesB/IscA family. As to quaternary structure, homodimer. Requires iron-sulfur cluster as cofactor.

Its function is as follows. Required for insertion of 4Fe-4S clusters. This Bordetella avium (strain 197N) protein is Putative iron-sulfur cluster insertion protein ErpA.